A 319-amino-acid chain; its full sequence is Cobalamin biosynthesis protein CobD (319 aa).

The next 4 membrane-spanning stretches (helical) occupy residues 56-76 (GLWIVVVGLTWLVSWGCLWLM), 153-173 (VDGVIAPLFFLMIGGAPLAMA), 204-224 (LANWLPARLSWLLLSAAAWFI), and 290-310 (IPLSIYLMMIASQLALLLFAL).

Belongs to the CobD/CbiB family.

It is found in the cell membrane. The protein operates within cofactor biosynthesis; adenosylcobalamin biosynthesis. Converts cobyric acid to cobinamide by the addition of aminopropanol on the F carboxylic group. The sequence is that of Cobalamin biosynthesis protein CobD from Photorhabdus laumondii subsp. laumondii (strain DSM 15139 / CIP 105565 / TT01) (Photorhabdus luminescens subsp. laumondii).